Here is a 291-residue protein sequence, read N- to C-terminus: Ecto-ADP-ribosyltransferase 5 (291 aa).

A signal peptide spans 1–22 (MALAALMIALGSLGLHTWQAQA). A disulfide bridge connects residues Cys-42 and Cys-258. Residues 62–252 (ALLRESWEAA…LVTLWSYNQT (191 aa)) enclose the TR mART core domain. Tyr-99 contributes to the NAD(+) binding site. The N-linked (GlcNAc...) asparagine glycan is linked to Asn-101. Residues Arg-160 and Gln-180 each coordinate NAD(+). The active site involves Arg-160. Residue Ser-183 is part of the active site. An N-linked (GlcNAc...) asparagine glycan is attached at Asn-196. Ser-214 provides a ligand contact to NAD(+). Glu-221 is an active-site residue. Asn-250 carries an N-linked (GlcNAc...) asparagine glycan.

This sequence belongs to the Arg-specific ADP-ribosyltransferase family.

The protein resides in the secreted. It carries out the reaction L-arginyl-[protein] + NAD(+) = N(omega)-(ADP-D-ribosyl)-L-arginyl-[protein] + nicotinamide + H(+). The polypeptide is Ecto-ADP-ribosyltransferase 5 (ART5) (Homo sapiens (Human)).